A 262-amino-acid polypeptide reads, in one-letter code: Cyclin-dependent kinase inhibitor 1 (262 aa).

The tract at residues 140 to 212 (SDVAEAGSEH…SAQQATRPKI (73 aa)) is disordered. Residues 160-169 (SGRDRERRET) are compositionally biased toward basic and acidic residues. Over residues 198-208 (SAATASAQQAT) the composition is skewed to low complexity.

It belongs to the CDI family. ICK/KRP subfamily.

This is Cyclin-dependent kinase inhibitor 1 (KRP1) from Oryza sativa subsp. indica (Rice).